The chain runs to 490 residues: ATP synthase subunit beta, chloroplastic (490 aa).

169 to 176 (GGAGVGKT) contributes to the ATP binding site.

The protein belongs to the ATPase alpha/beta chains family. As to quaternary structure, F-type ATPases have 2 components, CF(1) - the catalytic core - and CF(0) - the membrane proton channel. CF(1) has five subunits: alpha(3), beta(3), gamma(1), delta(1), epsilon(1). CF(0) has four main subunits: a(1), b(1), b'(1) and c(9-12).

Its subcellular location is the plastid. The protein localises to the chloroplast thylakoid membrane. The catalysed reaction is ATP + H2O + 4 H(+)(in) = ADP + phosphate + 5 H(+)(out). Functionally, produces ATP from ADP in the presence of a proton gradient across the membrane. The catalytic sites are hosted primarily by the beta subunits. The chain is ATP synthase subunit beta, chloroplastic from Cyanidium caldarium (Red alga).